The sequence spans 28 residues: Ranatuerin-2LTa (28 aa).

The cysteines at positions 23 and 28 are disulfide-linked.

As to expression, expressed by the skin glands.

Its subcellular location is the secreted. Its function is as follows. Has antibacterial activity. The sequence is that of Ranatuerin-2LTa from Rana latastei (Italian agile frog).